A 451-amino-acid chain; its full sequence is CBL-interacting protein kinase 10 (451 aa).

Residues Tyr13–Phe267 enclose the Protein kinase domain. Residues Leu19–Val27 and Lys42 each bind ATP. The Proton acceptor role is filled by Asp135. Positions Asp153–Glu182 are activation loop. The NAF domain maps to Ile304–Glu336. Positions Lys341–Phe370 are PPI.

It belongs to the protein kinase superfamily. CAMK Ser/Thr protein kinase family. SNF1 subfamily. Mn(2+) is required as a cofactor.

The catalysed reaction is L-seryl-[protein] + ATP = O-phospho-L-seryl-[protein] + ADP + H(+). It catalyses the reaction L-threonyl-[protein] + ATP = O-phospho-L-threonyl-[protein] + ADP + H(+). Its function is as follows. CIPK serine-threonine protein kinases interact with CBL proteins. Binding of a CBL protein to the regulatory NAF domain of CIPK protein lead to the activation of the kinase in a calcium-dependent manner. The protein is CBL-interacting protein kinase 10 (CIPK10) of Oryza sativa subsp. japonica (Rice).